Consider the following 455-residue polypeptide: uncharacterized protein (455 aa).

The next 12 membrane-spanning stretches (helical) occupy residues 19–39 (FSLF…MFMG), 63–83 (ILNL…VIIS), 106–126 (FFIS…LLHM), 140–160 (FLQV…FSAI), 173–195 (VTIG…LFGF), 200–222 (VAGV…IVIV), 265–285 (MIVT…KVYT), 288–308 (ITMF…ILIG), 324–344 (MKSL…MTIF), 348–368 (LIGL…LIAM), 388–408 (AAGD…GIGL), and 410–430 (LAYL…ISFI).

This sequence belongs to the multi antimicrobial extrusion (MATE) (TC 2.A.66.1) family.

The protein localises to the cell membrane. This is an uncharacterized protein from Bacillus subtilis (strain 168).